We begin with the raw amino-acid sequence, 163 residues long: Staphylokinase (163 aa).

Residues 1–27 form the signal peptide; that stretch reads MLKRSLLFLTVLLLLFSFSSITNEVSA.

The protein belongs to the staphylokinase family.

The protein localises to the secreted. Its function is as follows. Potent plasminogen activator that converts plasminogen into plasmin. It forms a 1:1 complex with plasmin, which in turn activates other plasminogen molecules. This Staphylococcus phage S phi-C (Bacteriophage S phi-C) protein is Staphylokinase.